Consider the following 428-residue polypeptide: Serine--tRNA ligase (428 aa).

231-233 serves as a coordination point for L-serine; it reads TAE. Residue 262 to 264 participates in ATP binding; that stretch reads RSE. E285 contacts L-serine. ATP is bound at residue 349–352; sequence EISS. Position 385 (S385) interacts with L-serine.

Belongs to the class-II aminoacyl-tRNA synthetase family. Type-1 seryl-tRNA synthetase subfamily. In terms of assembly, homodimer. The tRNA molecule binds across the dimer.

It is found in the cytoplasm. It catalyses the reaction tRNA(Ser) + L-serine + ATP = L-seryl-tRNA(Ser) + AMP + diphosphate + H(+). The catalysed reaction is tRNA(Sec) + L-serine + ATP = L-seryl-tRNA(Sec) + AMP + diphosphate + H(+). The protein operates within aminoacyl-tRNA biosynthesis; selenocysteinyl-tRNA(Sec) biosynthesis; L-seryl-tRNA(Sec) from L-serine and tRNA(Sec): step 1/1. In terms of biological role, catalyzes the attachment of serine to tRNA(Ser). Is also able to aminoacylate tRNA(Sec) with serine, to form the misacylated tRNA L-seryl-tRNA(Sec), which will be further converted into selenocysteinyl-tRNA(Sec). The sequence is that of Serine--tRNA ligase from Cellvibrio japonicus (strain Ueda107) (Pseudomonas fluorescens subsp. cellulosa).